A 322-amino-acid chain; its full sequence is DNA repair and recombination protein RadA (322 aa).

Residue 105–112 (GMFGSGKT) coordinates ATP.

Belongs to the eukaryotic RecA-like protein family.

Involved in DNA repair and in homologous recombination. Binds and assemble on single-stranded DNA to form a nucleoprotein filament. Hydrolyzes ATP in a ssDNA-dependent manner and promotes DNA strand exchange between homologous DNA molecules. This Methanococcus maripaludis (Methanococcus deltae) protein is DNA repair and recombination protein RadA.